The chain runs to 244 residues: Tegument protein UL51 (244 aa).

A lipid anchor (S-palmitoyl cysteine; by host) is attached at cysteine 9. A disordered region spans residues 178 to 244; sequence GVTEAPSLGH…SRAAPCVLGQ (67 aa). A compositionally biased stretch (low complexity) spans 221–244; sequence PRPTASPTAPRPGPSRAAPCVLGQ.

It belongs to the herpesviridae UL51 family. Oligomerizes. Interacts with UL7; this interaction mediates UL7 incorporation to virions. Interacts with UL14. Phosphorylated. Post-translationally, palmitoylation is necessary for Golgi localization.

Its subcellular location is the virion tegument. It is found in the host cytoplasm. The protein resides in the host Golgi apparatus. Functionally, plays several roles during the time course of infection, including egress of virus particles from the perinuclear space and secondary envelopment of cytoplasmic capsids that bud into specific trans-Golgi network (TGN)-derived membranes. Plays also an essential role in the maintenance of host cytoplasmic viral assembly center (cVAC) morphology in primary host neuronal cells. The sequence is that of Tegument protein UL51 from Homo sapiens (Human).